The chain runs to 46 residues: Protein YmiA (46 aa).

The chain crosses the membrane as a helical span at residues 22–42 (AWLAVFLGSALFWVVVALLIW).

Its subcellular location is the cell inner membrane. The sequence is that of Protein YmiA (ymiA) from Escherichia coli (strain K12).